The following is a 395-amino-acid chain: Ribosomal RNA small subunit methyltransferase H (395 aa).

Residues 101 to 103, aspartate 120, tyrosine 147, aspartate 171, and glutamine 178 contribute to the S-adenosyl-L-methionine site; that span reads GGH.

The protein belongs to the methyltransferase superfamily. RsmH family.

The protein localises to the cytoplasm. The catalysed reaction is cytidine(1402) in 16S rRNA + S-adenosyl-L-methionine = N(4)-methylcytidine(1402) in 16S rRNA + S-adenosyl-L-homocysteine + H(+). Specifically methylates the N4 position of cytidine in position 1402 (C1402) of 16S rRNA. This Mycobacterium marinum (strain ATCC BAA-535 / M) protein is Ribosomal RNA small subunit methyltransferase H.